We begin with the raw amino-acid sequence, 784 residues long: DNA ligase (784 aa).

NAD(+)-binding positions include 35-39 (DAEYD), 84-85 (SL), and E117. K119 (N6-AMP-lysine intermediate) is an active-site residue. R140, E177, K294, and K318 together coordinate NAD(+). The Zn(2+) site is built by C412, C415, C442, and C448. In terms of domain architecture, BRCT spans 703 to 784 (AEGLPLAGQT…FLALLRQLES (82 aa)).

The protein belongs to the NAD-dependent DNA ligase family. LigA subfamily. Mg(2+) is required as a cofactor. The cofactor is Mn(2+).

It carries out the reaction NAD(+) + (deoxyribonucleotide)n-3'-hydroxyl + 5'-phospho-(deoxyribonucleotide)m = (deoxyribonucleotide)n+m + AMP + beta-nicotinamide D-nucleotide.. Functionally, DNA ligase that catalyzes the formation of phosphodiester linkages between 5'-phosphoryl and 3'-hydroxyl groups in double-stranded DNA using NAD as a coenzyme and as the energy source for the reaction. It is essential for DNA replication and repair of damaged DNA. This is DNA ligase from Azotobacter vinelandii (strain DJ / ATCC BAA-1303).